Consider the following 637-residue polypeptide: Biosynthetic arginine decarboxylase (637 aa).

Lysine 101 is subject to N6-(pyridoxal phosphate)lysine. 286–296 (VDIGGGLGVDY) is a binding site for substrate.

This sequence belongs to the Orn/Lys/Arg decarboxylase class-II family. SpeA subfamily. It depends on Mg(2+) as a cofactor. Pyridoxal 5'-phosphate is required as a cofactor.

It catalyses the reaction L-arginine + H(+) = agmatine + CO2. It participates in amine and polyamine biosynthesis; agmatine biosynthesis; agmatine from L-arginine: step 1/1. Catalyzes the biosynthesis of agmatine from arginine. The polypeptide is Biosynthetic arginine decarboxylase (Marinobacter nauticus (strain ATCC 700491 / DSM 11845 / VT8) (Marinobacter aquaeolei)).